A 333-amino-acid polypeptide reads, in one-letter code: Holliday junction branch migration complex subunit RuvB (333 aa).

The interval M1–Y182 is large ATPase domain (RuvB-L). ATP-binding positions include L21, R22, G63, K66, T67, T68, E129–F131, R172, Y182, and R219. T67 lines the Mg(2+) pocket. The small ATPAse domain (RuvB-S) stretch occupies residues T183 to Q253. The interval K256 to I333 is head domain (RuvB-H). R311 and R316 together coordinate DNA.

It belongs to the RuvB family. As to quaternary structure, homohexamer. Forms an RuvA(8)-RuvB(12)-Holliday junction (HJ) complex. HJ DNA is sandwiched between 2 RuvA tetramers; dsDNA enters through RuvA and exits via RuvB. An RuvB hexamer assembles on each DNA strand where it exits the tetramer. Each RuvB hexamer is contacted by two RuvA subunits (via domain III) on 2 adjacent RuvB subunits; this complex drives branch migration. In the full resolvosome a probable DNA-RuvA(4)-RuvB(12)-RuvC(2) complex forms which resolves the HJ.

The protein localises to the cytoplasm. The catalysed reaction is ATP + H2O = ADP + phosphate + H(+). Its function is as follows. The RuvA-RuvB-RuvC complex processes Holliday junction (HJ) DNA during genetic recombination and DNA repair, while the RuvA-RuvB complex plays an important role in the rescue of blocked DNA replication forks via replication fork reversal (RFR). RuvA specifically binds to HJ cruciform DNA, conferring on it an open structure. The RuvB hexamer acts as an ATP-dependent pump, pulling dsDNA into and through the RuvAB complex. RuvB forms 2 homohexamers on either side of HJ DNA bound by 1 or 2 RuvA tetramers; 4 subunits per hexamer contact DNA at a time. Coordinated motions by a converter formed by DNA-disengaged RuvB subunits stimulates ATP hydrolysis and nucleotide exchange. Immobilization of the converter enables RuvB to convert the ATP-contained energy into a lever motion, pulling 2 nucleotides of DNA out of the RuvA tetramer per ATP hydrolyzed, thus driving DNA branch migration. The RuvB motors rotate together with the DNA substrate, which together with the progressing nucleotide cycle form the mechanistic basis for DNA recombination by continuous HJ branch migration. Branch migration allows RuvC to scan DNA until it finds its consensus sequence, where it cleaves and resolves cruciform DNA. This chain is Holliday junction branch migration complex subunit RuvB, found in Bacillus cytotoxicus (strain DSM 22905 / CIP 110041 / 391-98 / NVH 391-98).